Reading from the N-terminus, the 184-residue chain is ATP synthase subunit b, chloroplastic (184 aa).

A helical transmembrane segment spans residues 31-49 (IINPSVVLSVLIYFGKGVL).

Belongs to the ATPase B chain family. As to quaternary structure, F-type ATPases have 2 components, F(1) - the catalytic core - and F(0) - the membrane proton channel. F(1) has five subunits: alpha(3), beta(3), gamma(1), delta(1), epsilon(1). F(0) has four main subunits: a(1), b(1), b'(1) and c(10-14). The alpha and beta chains form an alternating ring which encloses part of the gamma chain. F(1) is attached to F(0) by a central stalk formed by the gamma and epsilon chains, while a peripheral stalk is formed by the delta, b and b' chains.

It localises to the plastid. The protein localises to the chloroplast thylakoid membrane. In terms of biological role, f(1)F(0) ATP synthase produces ATP from ADP in the presence of a proton or sodium gradient. F-type ATPases consist of two structural domains, F(1) containing the extramembraneous catalytic core and F(0) containing the membrane proton channel, linked together by a central stalk and a peripheral stalk. During catalysis, ATP synthesis in the catalytic domain of F(1) is coupled via a rotary mechanism of the central stalk subunits to proton translocation. Its function is as follows. Component of the F(0) channel, it forms part of the peripheral stalk, linking F(1) to F(0). The polypeptide is ATP synthase subunit b, chloroplastic (Pinus koraiensis (Korean pine)).